The chain runs to 207 residues: Guanylate kinase (207 aa).

One can recognise a Guanylate kinase-like domain in the interval 5 to 184 (GNLFIVSAPS…ALADLRAIIR (180 aa)). An ATP-binding site is contributed by 12–19 (APSGAGKS).

This sequence belongs to the guanylate kinase family.

It localises to the cytoplasm. The enzyme catalyses GMP + ATP = GDP + ADP. In terms of biological role, essential for recycling GMP and indirectly, cGMP. The chain is Guanylate kinase from Shewanella oneidensis (strain ATCC 700550 / JCM 31522 / CIP 106686 / LMG 19005 / NCIMB 14063 / MR-1).